A 235-amino-acid polypeptide reads, in one-letter code: Claudin-16 (235 aa).

Over 1 to 3 the chain is Cytoplasmic; sequence MKD. A helical membrane pass occupies residues 4–24; the sequence is LLQYAACFLAIFSTGFLIVAT. Residues 25 to 79 lie on the Extracellular side of the membrane; it reads WTDCWMVNADDSLEVSTKCRGLWWECVTNAFDGIRTCDEYDSIYAEHPLKLVVTR. The helical transmembrane segment at 80–100 threads the bilayer; that stretch reads ALMITADILAGFGFITLLLGL. The Cytoplasmic portion of the chain corresponds to 101-115; that stretch reads DCVKFLPDDPQIKVR. The chain crosses the membrane as a helical span at residues 116 to 136; that stretch reads LCFVAGTTLLIAGTPGIIGSV. Residues 137–169 lie on the Extracellular side of the membrane; it reads WYAVDVYVERSSLVLHNIFLGIQYKFGWSCWLG. Residues 170-190 traverse the membrane as a helical segment; it reads MAGSLGCFLAGALLTCCLYLF. Over 191–235 the chain is Cytoplasmic; the sequence is KDVGPERNYPYAMRKPYSTAGVSMAKSYKAPRTETAKMYAVDTRV. Positions 233 to 235 match the Interaction with TJP1 motif; sequence TRV.

Belongs to the claudin family. As to quaternary structure, can form heteropolymeric tight junction strands with other claudins. Interacts with CLDN19. Cannot form tight junction strands on its own. Interacts (via PDZ-binding motif TRV) with TJP1 (via PDZ domain). As to expression, expressed in the corticomedullary axis of the TAL, specifically in the cortex and the outer stripe of outer medulla (OSOM) zone (at protein level).

Its subcellular location is the cell junction. The protein localises to the tight junction. The protein resides in the cell membrane. The catalysed reaction is Mg(2+)(in) = Mg(2+)(out). It carries out the reaction Ca(2+)(in) = Ca(2+)(out). It catalyses the reaction Na(+)(in) = Na(+)(out). The enzyme catalyses K(+)(in) = K(+)(out). The catalysed reaction is Rb(+)(in) = Rb(+)(out). It carries out the reaction Cs(+)(in) = Cs(+)(out). It catalyses the reaction Li(+)(in) = Li(+)(out). In terms of biological role, forms paracellular channels: coassembles with CLDN19 into tight junction strands with cation-selective channels through the strands, conveying epithelial permeability in a process known as paracellular tight junction permeability. Involved in the maintenance of ion gradients along the nephron. In the thick ascending limb (TAL) of Henle's loop, facilitates sodium paracellular permeability from the interstitial compartment to the lumen, contributing to the lumen-positive transepithelial potential that drives paracellular magnesium and calcium reabsorption. This is Claudin-16 from Mus musculus (Mouse).